The following is a 357-amino-acid chain: Pre-mRNA-splicing factor RBM22 homolog (357 aa).

Residues Arg-153–Ile-180 form a C3H1-type zinc finger. Residues Asn-222 to Asn-295 form the RRM domain.

Belongs to the SLT11 family. As to quaternary structure, probable component of the spliceosome C complex.

Its subcellular location is the nucleus. Its function is as follows. Involved in pre-mRNA splicing. Binds RNA. The polypeptide is Pre-mRNA-splicing factor RBM22 homolog (Plasmodium falciparum (isolate 3D7)).